We begin with the raw amino-acid sequence, 273 residues long: Shikimate dehydrogenase (NADP(+)) (273 aa).

Shikimate contacts are provided by residues 19-21 and Thr-66; that span reads SKS. Lys-70 acts as the Proton acceptor in catalysis. Positions 91 and 107 each coordinate shikimate. NADP(+)-binding positions include 131–135 and Met-218; that span reads GAGGA. Residue Tyr-220 participates in shikimate binding. An NADP(+)-binding site is contributed by Gly-242.

This sequence belongs to the shikimate dehydrogenase family. As to quaternary structure, homodimer.

The enzyme catalyses shikimate + NADP(+) = 3-dehydroshikimate + NADPH + H(+). The protein operates within metabolic intermediate biosynthesis; chorismate biosynthesis; chorismate from D-erythrose 4-phosphate and phosphoenolpyruvate: step 4/7. Involved in the biosynthesis of the chorismate, which leads to the biosynthesis of aromatic amino acids. Catalyzes the reversible NADPH linked reduction of 3-dehydroshikimate (DHSA) to yield shikimate (SA). The sequence is that of Shikimate dehydrogenase (NADP(+)) from Buchnera aphidicola subsp. Acyrthosiphon pisum (strain 5A).